Here is a 249-residue protein sequence, read N- to C-terminus: Tetrahydromethanopterin S-methyltransferase subunit A (249 aa).

Residues 1–227 (MADKKEVIQN…KISSGYYAGK (227 aa)) lie on the Cytoplasmic side of the membrane. Position 84 (His84) interacts with 5-hydroxybenzimidazolylcob(I)amide. Residues 228–248 (IEGIVIGFILTLVFLIIIIQG) form a helical membrane-spanning segment. Leu249 is a topological domain (extracellular).

This sequence belongs to the MtrA family. As to quaternary structure, the complex is composed of 8 subunits; MtrA, MtrB, MtrC, MtrD, MtrE, MtrF, MtrG and MtrH. Requires 5-hydroxybenzimidazolylcob(I)amide as cofactor.

Its subcellular location is the cell membrane. The catalysed reaction is 5-methyl-5,6,7,8-tetrahydromethanopterin + coenzyme M + 2 Na(+)(in) = 5,6,7,8-tetrahydromethanopterin + methyl-coenzyme M + 2 Na(+)(out). It participates in one-carbon metabolism; methanogenesis from CO(2); methyl-coenzyme M from 5,10-methylene-5,6,7,8-tetrahydromethanopterin: step 2/2. Functionally, part of a complex that catalyzes the formation of methyl-coenzyme M and tetrahydromethanopterin from coenzyme M and methyl-tetrahydromethanopterin. This is an energy-conserving, sodium-ion translocating step. This is Tetrahydromethanopterin S-methyltransferase subunit A from Methanosphaera stadtmanae (strain ATCC 43021 / DSM 3091 / JCM 11832 / MCB-3).